An 814-amino-acid chain; its full sequence is Phenylalanine--tRNA ligase beta subunit (814 aa).

A tRNA-binding domain is found at 39 to 153 (SKNVNGVVLG…LKHELGTPVS (115 aa)). Positions 414-500 (NEDIFIKLRR…RLIGYDRFDL (87 aa)) constitute a B5 domain. Mg(2+) is bound by residues Asp-478, Asp-484, Glu-487, and Glu-488. An FDX-ACB domain is found at 720–813 (PIVPKIERDI…IEKSFQTKLR (94 aa)).

It belongs to the phenylalanyl-tRNA synthetase beta subunit family. Type 1 subfamily. In terms of assembly, tetramer of two alpha and two beta subunits. Requires Mg(2+) as cofactor.

Its subcellular location is the cytoplasm. The catalysed reaction is tRNA(Phe) + L-phenylalanine + ATP = L-phenylalanyl-tRNA(Phe) + AMP + diphosphate + H(+). This chain is Phenylalanine--tRNA ligase beta subunit, found in Prochlorococcus marinus (strain MIT 9312).